An 80-amino-acid chain; its full sequence is Exodeoxyribonuclease 7 small subunit (80 aa).

This sequence belongs to the XseB family. As to quaternary structure, heterooligomer composed of large and small subunits.

It is found in the cytoplasm. It catalyses the reaction Exonucleolytic cleavage in either 5'- to 3'- or 3'- to 5'-direction to yield nucleoside 5'-phosphates.. Bidirectionally degrades single-stranded DNA into large acid-insoluble oligonucleotides, which are then degraded further into small acid-soluble oligonucleotides. This chain is Exodeoxyribonuclease 7 small subunit, found in Rickettsia canadensis (strain McKiel).